The primary structure comprises 708 residues: Probable inactive lysine-specific demethylase JMJ19 (708 aa).

Residues 35-59 (VPRDKESPRSVSRQEQTTGFGTDDK) are disordered. A compositionally biased stretch (polar residues) spans 43–54 (RSVSRQEQTTGF). The region spanning 108-149 (APVFNPTEEEFRDTLSYISSLRDRAEPYGICCVVPPPSWKPP) is the JmjN domain. Residues 293 to 454 (SSGWNLNSTA…HGDIAVQVNQ (162 aa)) enclose the JmjC domain. Residues Cys-544, Cys-547, Cys-558, Cys-560, Cys-567, His-570, Cys-575, and Cys-577 each contribute to the Zn(2+) site. The RING-type; degenerate zinc-finger motif lies at 544–581 (CCVCLGDLYLSAVNCSCSANRYSCLNHMRKLCACPCDR). A Nuclear localization signal motif is present at residues 646–653 (TRKDVAAG). Basic and acidic residues predominate over residues 678–694 (AKETLESCSKKSNRPCD). Positions 678–708 (AKETLESCSKKSNRPCDNDSSEANAPKKQKQ) are disordered.

The protein belongs to the JARID1 histone demethylase family. As to expression, expressed in inflorescences, roots, siliques, leaves and stems.

It is found in the nucleus. The polypeptide is Probable inactive lysine-specific demethylase JMJ19 (Arabidopsis thaliana (Mouse-ear cress)).